We begin with the raw amino-acid sequence, 400 residues long: Phosphoglycerate kinase (400 aa).

Substrate is bound by residues 19 to 21, arginine 38, 61 to 64, arginine 124, and arginine 161; these read DLN and HLGR. Residues lysine 211, glycine 299, glutamate 330, and 356–359 contribute to the ATP site; that span reads GGDS.

Belongs to the phosphoglycerate kinase family. As to quaternary structure, monomer.

It is found in the cytoplasm. It carries out the reaction (2R)-3-phosphoglycerate + ATP = (2R)-3-phospho-glyceroyl phosphate + ADP. Its pathway is carbohydrate degradation; glycolysis; pyruvate from D-glyceraldehyde 3-phosphate: step 2/5. This chain is Phosphoglycerate kinase, found in Frankia casuarinae (strain DSM 45818 / CECT 9043 / HFP020203 / CcI3).